The primary structure comprises 360 residues: Histidinol-phosphate aminotransferase (360 aa).

Lys-211 is modified (N6-(pyridoxal phosphate)lysine).

Belongs to the class-II pyridoxal-phosphate-dependent aminotransferase family. Histidinol-phosphate aminotransferase subfamily. As to quaternary structure, homodimer. Requires pyridoxal 5'-phosphate as cofactor.

It carries out the reaction L-histidinol phosphate + 2-oxoglutarate = 3-(imidazol-4-yl)-2-oxopropyl phosphate + L-glutamate. It participates in amino-acid biosynthesis; L-histidine biosynthesis; L-histidine from 5-phospho-alpha-D-ribose 1-diphosphate: step 7/9. The protein is Histidinol-phosphate aminotransferase of Cronobacter sakazakii (strain ATCC BAA-894) (Enterobacter sakazakii).